A 146-amino-acid chain; its full sequence is Hemoglobin subunit beta (146 aa).

At V1 the chain carries N-acetylvaline. Residues 2–146 enclose the Globin domain; sequence HLTGEEKSAV…VANALAHKYH (145 aa). T12 is modified (phosphothreonine). Phosphoserine is present on S44. K59 carries the post-translational modification N6-acetyllysine. Residue H63 participates in heme b binding. Residue K82 is modified to N6-acetyllysine. H92 is a heme b binding site. C93 is subject to S-nitrosocysteine. K144 is modified (N6-acetyllysine).

It belongs to the globin family. As to quaternary structure, heterotetramer of two alpha chains and two beta chains. In terms of tissue distribution, red blood cells.

Involved in oxygen transport from the lung to the various peripheral tissues. This chain is Hemoglobin subunit beta (HBB), found in Leontocebus fuscicollis (Brown-mantled tamarin).